We begin with the raw amino-acid sequence, 80 residues long: Acyl carrier protein (80 aa).

Positions 2–77 (KNIEERIKKI…KSIDFIQKKN (76 aa)) constitute a Carrier domain. At Ser-37 the chain carries O-(pantetheine 4'-phosphoryl)serine.

It belongs to the acyl carrier protein (ACP) family. 4'-phosphopantetheine is transferred from CoA to a specific serine of apo-ACP by AcpS. This modification is essential for activity because fatty acids are bound in thioester linkage to the sulfhydryl of the prosthetic group.

Its subcellular location is the cytoplasm. The protein operates within lipid metabolism; fatty acid biosynthesis. Its function is as follows. Carrier of the growing fatty acid chain in fatty acid biosynthesis. The sequence is that of Acyl carrier protein from Buchnera aphidicola subsp. Acyrthosiphon pisum (strain APS) (Acyrthosiphon pisum symbiotic bacterium).